The sequence spans 283 residues: Pantothenate synthetase (283 aa).

34–41 (MGALHDGH) provides a ligand contact to ATP. Histidine 41 functions as the Proton donor in the catalytic mechanism. Position 65 (glutamine 65) interacts with (R)-pantoate. Glutamine 65 lines the beta-alanine pocket. 152–155 (GSKD) lines the ATP pocket. Glutamine 158 serves as a coordination point for (R)-pantoate. ATP is bound by residues isoleucine 181 and 189–192 (MSSR).

The protein belongs to the pantothenate synthetase family. As to quaternary structure, homodimer.

The protein resides in the cytoplasm. It catalyses the reaction (R)-pantoate + beta-alanine + ATP = (R)-pantothenate + AMP + diphosphate + H(+). It functions in the pathway cofactor biosynthesis; (R)-pantothenate biosynthesis; (R)-pantothenate from (R)-pantoate and beta-alanine: step 1/1. Functionally, catalyzes the condensation of pantoate with beta-alanine in an ATP-dependent reaction via a pantoyl-adenylate intermediate. The polypeptide is Pantothenate synthetase (Rhodopseudomonas palustris (strain HaA2)).